Consider the following 284-residue polypeptide: Tropomyosin (284 aa).

A coiled-coil region spans residues 1–284 (MEAIKKKMQA…DQTFAELTGY (284 aa)).

This sequence belongs to the tropomyosin family. In terms of assembly, homodimer.

Its function is as follows. Tropomyosin, in association with the troponin complex, plays a central role in the calcium dependent regulation of muscle contraction. The chain is Tropomyosin from Dermatophagoides farinae (American house dust mite).